The chain runs to 58 residues: Small ribosomal subunit protein bS21 (58 aa).

The segment at 37–58 (FYEKPSVKRKRKSEAARKRKKF) is disordered. A compositionally biased stretch (basic residues) spans 43 to 58 (VKRKRKSEAARKRKKF).

Belongs to the bacterial ribosomal protein bS21 family.

The protein is Small ribosomal subunit protein bS21 of Streptococcus sanguinis (strain SK36).